Consider the following 1170-residue polypeptide: Short transient receptor potential channel 2 (1170 aa).

The Cytoplasmic portion of the chain corresponds to 1 to 627 (MLMSLTDSKE…GWRGSTTIWK (627 aa)). Disordered stretches follow at residues 64–113 (SLSD…QTST), 142–231 (AHKA…QATG), and 322–342 (ESGS…VEES). A compositionally biased stretch (polar residues) spans 74-85 (SPGSSGLNQNSS). Residues 158–177 (GEPDSSHPERAEPRAEEPNR) are compositionally biased toward basic and acidic residues. ANK repeat units follow at residues 300–329 (KFPP…DPSG), 346–376 (SWRE…DFRQ), 377–405 (IHEA…REKG), and 429–458 (PGVT…TIAR). The helical transmembrane segment at 628–648 (LFVAFLIFLTMPFLCIGYWLA) threads the bilayer. The Extracellular portion of the chain corresponds to 649–658 (PKSRLGRLLK). The helical transmembrane segment at 659-679 (IPVLKFLLHSASYLWFLIFLL) threads the bilayer. Residues 680–701 (GESLVMETQLSTFKGRSQSVWE) lie on the Cytoplasmic side of the membrane. The helical transmembrane segment at 702-722 (TSLHMIWVTGFLWFECKEVWI) threads the bilayer. The Extracellular segment spans residues 723–737 (EGLRSYLLDWWNFLD). The helical transmembrane segment at 738–758 (VVILSLYLASFALRLLLAGLA) threads the bilayer. The Cytoplasmic portion of the chain corresponds to 759–788 (YMHCRDASDSSTCRYFTTAERSEWRTEDPQ). Residues 789 to 809 (FLAEVLFAVTSMLSFTRLAYI) traverse the membrane as a helical segment. The Extracellular segment spans residues 810–832 (LPAHESLGTLQISIGKMIDDMIR). Residues 833-853 (FMFILMIILTAFLCGLNNIYV) traverse the membrane as a helical segment. Topologically, residues 854-898 (PYQETEKLGNFNETFQFLFWTMFGMEEHSVVDMPQFLVPEFVGRA) are cytoplasmic. A helical membrane pass occupies residues 899–919 (MYGIFTIVMVIVLLNMLIAMI). Residues 920-1170 (TNSFQKIEDD…GEDLETKGES (251 aa)) lie on the Extracellular side of the membrane. The stretch at 1030–1068 (RREFEETRRKDLGNRLTELTKTVSRLQSEVASVQKTVAA) forms a coiled coil. A disordered region spans residues 1118–1170 (LEDSLDATGEAGTPASGESSSSSSAHVLVHREQEAEGAGDLPLGEDLETKGES).

The protein belongs to the transient receptor (TC 1.A.4) family. STrpC subfamily. TRPC2 sub-subfamily. Expressed exclusively in vomeronasal organ neurons (sensory microvilli).

The protein localises to the membrane. In terms of biological role, thought to form a receptor-activated calcium permeant cation channel. Probably is operated by a phosphatidylinositol second messenger system activated by receptor tyrosine kinases or G-protein coupled receptors. Is not activated by intracellular calcium store depletion. This Rattus norvegicus (Rat) protein is Short transient receptor potential channel 2 (Trpc2).